Consider the following 306-residue polypeptide: 3-methyl-2-oxobutanoate hydroxymethyltransferase (306 aa).

Residues Asp-53 and Asp-96 each coordinate Mg(2+). Residues 53 to 54 (DS), Asp-96, and Lys-126 contribute to the 3-methyl-2-oxobutanoate site. Glu-128 contacts Mg(2+). Glu-195 acts as the Proton acceptor in catalysis.

It belongs to the PanB family. In terms of assembly, homodecamer; pentamer of dimers. Mg(2+) serves as cofactor.

Its subcellular location is the cytoplasm. The enzyme catalyses 3-methyl-2-oxobutanoate + (6R)-5,10-methylene-5,6,7,8-tetrahydrofolate + H2O = 2-dehydropantoate + (6S)-5,6,7,8-tetrahydrofolate. The protein operates within cofactor biosynthesis; (R)-pantothenate biosynthesis; (R)-pantoate from 3-methyl-2-oxobutanoate: step 1/2. Its function is as follows. Catalyzes the reversible reaction in which hydroxymethyl group from 5,10-methylenetetrahydrofolate is transferred onto alpha-ketoisovalerate to form ketopantoate. This is 3-methyl-2-oxobutanoate hydroxymethyltransferase from Anaeromyxobacter sp. (strain K).